A 339-amino-acid polypeptide reads, in one-letter code: Cullin-associated NEDD8-dissociated protein 1, N-terminal part (339 aa).

2 HEAT repeats span residues 5 to 42 (HTIQ…NPCS) and 50 to 87 (ASAT…RLPL).

Interacts with candA-C. Interacts with unneddylated cullins culA and culD; interaction occurs only when complexed with candA-C.

It is found in the nucleus. In terms of biological role, assembly factor of SCF (SKP1-CUL1-F-box protein) E3 ubiquitin ligase complexes that promotes the exchange of the substrate-recognition F-box subunit in SCF complexes, thereby playing a key role in the cellular repertoire of SCF complexes. Acts as a F-box protein exchange factor when interacting with candA-C. This Emericella nidulans (strain FGSC A4 / ATCC 38163 / CBS 112.46 / NRRL 194 / M139) (Aspergillus nidulans) protein is Cullin-associated NEDD8-dissociated protein 1, N-terminal part (candA-N).